Here is a 732-residue protein sequence, read N- to C-terminus: Catalase-peroxidase (732 aa).

The segment at residues 97-220 (WHSAGTYRTG…LAAVQMGLIY (124 aa)) is a cross-link (tryptophyl-tyrosyl-methioninium (Trp-Tyr) (with M-246)). The active-site Proton acceptor is His-98. A cross-link (tryptophyl-tyrosyl-methioninium (Tyr-Met) (with W-97)) is located at residues 220–246 (YVNPEGPDGKPDPVAAGKDIRETFGRM). His-261 is a heme b binding site.

Belongs to the peroxidase family. Peroxidase/catalase subfamily. Homodimer or homotetramer. Heme b serves as cofactor. Post-translationally, formation of the three residue Trp-Tyr-Met cross-link is important for the catalase, but not the peroxidase activity of the enzyme.

The enzyme catalyses H2O2 + AH2 = A + 2 H2O. It catalyses the reaction 2 H2O2 = O2 + 2 H2O. Its function is as follows. Bifunctional enzyme with both catalase and broad-spectrum peroxidase activity. The protein is Catalase-peroxidase of Chlorobium phaeobacteroides (strain BS1).